Here is a 320-residue protein sequence, read N- to C-terminus: UDP-3-O-acyl-N-acetylglucosamine deacetylase (320 aa).

Zn(2+)-binding residues include histidine 92, histidine 251, and aspartate 255. Histidine 278 serves as the catalytic Proton donor.

The protein belongs to the LpxC family. It depends on Zn(2+) as a cofactor.

It catalyses the reaction a UDP-3-O-[(3R)-3-hydroxyacyl]-N-acetyl-alpha-D-glucosamine + H2O = a UDP-3-O-[(3R)-3-hydroxyacyl]-alpha-D-glucosamine + acetate. Its pathway is glycolipid biosynthesis; lipid IV(A) biosynthesis; lipid IV(A) from (3R)-3-hydroxytetradecanoyl-[acyl-carrier-protein] and UDP-N-acetyl-alpha-D-glucosamine: step 2/6. In terms of biological role, catalyzes the hydrolysis of UDP-3-O-myristoyl-N-acetylglucosamine to form UDP-3-O-myristoylglucosamine and acetate, the committed step in lipid A biosynthesis. This chain is UDP-3-O-acyl-N-acetylglucosamine deacetylase, found in Psychrobacter cryohalolentis (strain ATCC BAA-1226 / DSM 17306 / VKM B-2378 / K5).